The chain runs to 137 residues: Basic phospholipase A2 3 (137 aa).

An N-terminal signal peptide occupies residues 1-11 (LVAVCVSLLGA). The propeptide occupies 12-19 (ANIPPQPL). 7 cysteine pairs are disulfide-bonded: Cys30/Cys89, Cys44/Cys136, Cys46/Cys62, Cys61/Cys117, Cys68/Cys110, Cys78/Cys103, and Cys96/Cys108. Positions 45, 47, and 49 each coordinate Ca(2+). His65 is an active-site residue. Asp66 contacts Ca(2+). Residue Asp111 is part of the active site.

This sequence belongs to the phospholipase A2 family. Group I subfamily. D49 sub-subfamily. Monomer, or homotrimer. Was firstly described as a trimer, but has been reinterpreted with the possibility of being a monomer. It depends on Ca(2+) as a cofactor. As to expression, expressed by the venom gland.

It is found in the secreted. The catalysed reaction is a 1,2-diacyl-sn-glycero-3-phosphocholine + H2O = a 1-acyl-sn-glycero-3-phosphocholine + a fatty acid + H(+). Snake venom phospholipase A2 (PLA2) that shows anticoagulant and neurotoxic activities. PLA2 catalyzes the calcium-dependent hydrolysis of the 2-acyl groups in 3-sn-phosphoglycerides. The polypeptide is Basic phospholipase A2 3 (Bungarus caeruleus (Indian krait)).